The sequence spans 721 residues: Polyribonucleotide nucleotidyltransferase (721 aa).

Residues aspartate 495 and aspartate 501 each coordinate Mg(2+). One can recognise a KH domain in the interval 562 to 621; that stretch reads PRLLSFRIDPELIGTVIGPGGRTIKGITERTNTKIDIEDGGIVTIASHDGAAAEEAQKII. Residues 631 to 699 enclose the S1 motif domain; sequence GEIFSGVVTR…SRGRINLTLR (69 aa). Residues 701–721 form a disordered region; sequence VGQNNGMSYPEPTPTPVAPLN. A compositionally biased stretch (pro residues) spans 711–721; sequence EPTPTPVAPLN.

The protein belongs to the polyribonucleotide nucleotidyltransferase family. It depends on Mg(2+) as a cofactor.

The protein resides in the cytoplasm. It carries out the reaction RNA(n+1) + phosphate = RNA(n) + a ribonucleoside 5'-diphosphate. Functionally, involved in mRNA degradation. Catalyzes the phosphorolysis of single-stranded polyribonucleotides processively in the 3'- to 5'-direction. The chain is Polyribonucleotide nucleotidyltransferase from Prochlorococcus marinus (strain MIT 9215).